Consider the following 3093-residue polypeptide: Genome polyprotein (3093 aa).

Residues 255 to 403 (KRLLRHVHQA…TTTGERIEYY (149 aa)) enclose the Peptidase S30 domain. Active-site for P1 proteinase activity residues include His311, Asp323, and Ser355. The region spanning 690-809 (HYVPKVGYCY…ASELKEYEIG (120 aa)) is the Peptidase C6 domain. Active-site for helper component proteinase activity residues include Cys698 and His769. In terms of domain architecture, Helicase ATP-binding spans 1215 to 1366 (RVLADKDNEF…AQKSLDIMTL (152 aa)). 1228–1235 (GHVGCGKS) provides a ligand contact to ATP. A DEVH box motif is present at residues 1316 to 1319 (DEVH). A Helicase C-terminal domain is found at 1367–1546 (PTMTPLDFVK…QVPPVLRNVN (180 aa)). Positions 1883 to 1895 (DKVRKKANVHAMQ) match the Nuclear localization signal motif. Tyr1915 carries the post-translational modification O-(5'-phospho-RNA)-tyrosine. The region spanning 2041–2257 (SKALYGGPRC…VDVGGLYIHN (217 aa)) is the Peptidase C4 domain. Catalysis depends on for nuclear inclusion protein A activity residues His2082, Asp2121, and Cys2193. The region spanning 2516 to 2639 (EWFIDADGSQ…NANEEAKDVV (124 aa)) is the RdRp catalytic domain. Low complexity predominate over residues 2800–2826 (NAAATSGATTPAQNVGAGTTTPAKATP). Residues 2800–2842 (NAAATSGATTPAQNVGAGTTTPAKATPQSGRRPSFGSLIDNPI) form a disordered region.

This sequence belongs to the potyviridae genome polyprotein family. VPg is uridylylated by the polymerase and is covalently attached to the 5'-end of the genomic RNA. This uridylylated form acts as a nucleotide-peptide primer for the polymerase. Post-translationally, genome polyprotein of potyviruses undergoes post-translational proteolytic processing by the main proteinase NIa-pro resulting in the production of at least ten individual proteins. The P1 proteinase and the HC-pro cleave only their respective C-termini autocatalytically. 6K1 is essential for proper proteolytic separation of P3 from CI.

It localises to the host cytoplasmic vesicle. The protein resides in the virion. The enzyme catalyses RNA(n) + a ribonucleoside 5'-triphosphate = RNA(n+1) + diphosphate. It catalyses the reaction Hydrolyzes glutaminyl bonds, and activity is further restricted by preferences for the amino acids in P6 - P1' that vary with the species of potyvirus, e.g. Glu-Xaa-Xaa-Tyr-Xaa-Gln-|-(Ser or Gly) for the enzyme from tobacco etch virus. The natural substrate is the viral polyprotein, but other proteins and oligopeptides containing the appropriate consensus sequence are also cleaved.. The catalysed reaction is Hydrolyzes a Gly-|-Gly bond at its own C-terminus, commonly in the sequence -Tyr-Xaa-Val-Gly-|-Gly, in the processing of the potyviral polyprotein.. Functionally, required for aphid transmission and also has proteolytic activity. Only cleaves a Gly-Gly dipeptide at its own C-terminus. Interacts with virions and aphid stylets. Acts as a suppressor of RNA-mediated gene silencing, also known as post-transcriptional gene silencing (PTGS), a mechanism of plant viral defense that limits the accumulation of viral RNAs. May have RNA-binding activity. Its function is as follows. Has helicase activity. It may be involved in replication. Indispensable for virus replication. Reduces the abundance of host transcripts related to jasmonic acid biosynthesis therefore altering the host defenses. In order to increase its own stability, decreases host protein degradation pathways. In terms of biological role, indispensable for virus replication. Functionally, mediates the cap-independent, EIF4E-dependent translation of viral genomic RNAs. Binds to the cap-binding site of host EIF4E and thus interferes with the host EIF4E-dependent mRNA export and translation. VPg-RNA directly binds EIF4E and is a template for transcription. Also forms trimeric complexes with EIF4E-EIF4G, which are templates for translation. Its function is as follows. Has RNA-binding and proteolytic activities. An RNA-dependent RNA polymerase that plays an essential role in the virus replication. In terms of biological role, involved in aphid transmission, cell-to-cell and systemis movement, encapsidation of the viral RNA and in the regulation of viral RNA amplification. The polypeptide is Genome polyprotein (Brome streak virus (strain 11-Cal) (BStV)).